An 83-amino-acid polypeptide reads, in one-letter code: U4-theraphotoxin-Hhn1x (83 aa).

The N-terminal stretch at 1–20 (MTLIAILTCAAALVLHTTAA) is a signal peptide. Positions 21–46 (EELEAESQLMEVGMPDTELEAVDEER) are excised as a propeptide. Cystine bridges form between C50-C64, C54-C75, and C69-C80.

Belongs to the neurotoxin 12 (Hwtx-2) family. 02 (Hwtx-2) subfamily. As to expression, expressed by the venom gland.

The protein localises to the secreted. Its function is as follows. Postsynaptic neurotoxin. The sequence is that of U4-theraphotoxin-Hhn1x from Cyriopagopus hainanus (Chinese bird spider).